We begin with the raw amino-acid sequence, 66 residues long: Large ribosomal subunit protein bL31 (66 aa).

Residues cysteine 16, cysteine 18, cysteine 36, and cysteine 39 each coordinate Zn(2+).

This sequence belongs to the bacterial ribosomal protein bL31 family. Type A subfamily. Part of the 50S ribosomal subunit. Zn(2+) serves as cofactor.

Binds the 23S rRNA. This Campylobacter fetus subsp. fetus (strain 82-40) protein is Large ribosomal subunit protein bL31.